We begin with the raw amino-acid sequence, 61 residues long: Large ribosomal subunit protein uL30 (61 aa).

This sequence belongs to the universal ribosomal protein uL30 family. In terms of assembly, part of the 50S ribosomal subunit.

The protein is Large ribosomal subunit protein uL30 of Fervidobacterium nodosum (strain ATCC 35602 / DSM 5306 / Rt17-B1).